A 248-amino-acid polypeptide reads, in one-letter code: Probable septum site-determining protein MinC (248 aa).

The interval 94–126 (GMPPAMRGGQPAADFEAPAGEPQANPGAPEPQI) is disordered.

It belongs to the MinC family. As to quaternary structure, interacts with MinD and FtsZ.

Functionally, cell division inhibitor that blocks the formation of polar Z ring septums. Rapidly oscillates between the poles of the cell to destabilize FtsZ filaments that have formed before they mature into polar Z rings. Prevents FtsZ polymerization. In Brucella suis biovar 1 (strain 1330), this protein is Probable septum site-determining protein MinC.